The sequence spans 388 residues: Succinate--CoA ligase [ADP-forming] subunit beta (388 aa).

An ATP-grasp domain is found at K9–H244. Residues K46, G53–G55, E99, S102, and E107 each bind ATP. Residues N199 and D213 each contribute to the Mg(2+) site. Substrate contacts are provided by residues N264 and G321 to V323.

The protein belongs to the succinate/malate CoA ligase beta subunit family. As to quaternary structure, heterotetramer of two alpha and two beta subunits. Mg(2+) serves as cofactor.

It carries out the reaction succinate + ATP + CoA = succinyl-CoA + ADP + phosphate. The catalysed reaction is GTP + succinate + CoA = succinyl-CoA + GDP + phosphate. It participates in carbohydrate metabolism; tricarboxylic acid cycle; succinate from succinyl-CoA (ligase route): step 1/1. Functionally, succinyl-CoA synthetase functions in the citric acid cycle (TCA), coupling the hydrolysis of succinyl-CoA to the synthesis of either ATP or GTP and thus represents the only step of substrate-level phosphorylation in the TCA. The beta subunit provides nucleotide specificity of the enzyme and binds the substrate succinate, while the binding sites for coenzyme A and phosphate are found in the alpha subunit. In Vibrio atlanticus (strain LGP32) (Vibrio splendidus (strain Mel32)), this protein is Succinate--CoA ligase [ADP-forming] subunit beta.